Reading from the N-terminus, the 1802-residue chain is MVSLKIKKILLLVSLLNAIEAYSNDTIYSTSYNNGIESTPSYSTSAISSTGSSNKENAITSSSETTTMAGQYGESGSTTIMDEQETGTSSQYISVTTTTQTSDTMSSVKKSTEIATPSSSIVPTPLQSYSDESQISQTLSHNPKSVAESDSDTTSSESSSSVIISTSDSSAVPREISPIITTDSQISKEEGTLAQTSSISETTRIAQMVTRVSQISSITAASTIDGFSSESTQTDFSNTVSFENSVEEEYAMSKSQLSESYSSSSTVYSGGESTADKTSSSPITSFSSSYSQTTSTETSESSRVAVGVSRPSSITQTTSIDSFSMSEVELSTYYDLSAGNYPDQELIVDRPATSSTAETSSEASQGVSRESNTFAVSSISTTNFIVSSASDTVVSTSSTNTVPYSSVHSTFVHATSSSTYISSSLYSSPSLSASVSSHFGVAPFPSAYISFSSVPVAVSSTYTSSPSASVVVPSAYASSPSVPVAVSSTYTSSPSAPAAISSTYTSSPSAPVAVSSTYTSSPSAPAAISSTYTSSPSAPVAVSSTYTSSPSAPAAISSTYTSSPSAPVAVSSTYTSSPSAPVAISSTYTSSPSVPVAVSSTYTSSPSAPAAISSTYTSSPSAPVAVSSTYTSSPSAPAAISSTYTSSPSVPVAVSSTYTSSPSAPAAISSTYTSSPSVPVAVSSTYTSSPSAPAAISSTYTSSPSAPVAVSSTYTSSPSAPAAISSTYTSSPSAPVAVSSTYTSSPSAPAAISSTYTSSPSAPVAVSSTYTSSPSALVVLSSTSTSSPYDIVYSPSTFAAISSGYTPSPSASVAMSSTSSSSPYDIVYSLSSSASRSSIATYEFSPSPSTSLPTSSTYTYFSSAYAFEFSSERYSTTSTIAPTQIHSTLSRITDFLLQTSMAIQSIVSQQISTSSTLNDEIHSSALSVFNPSASNLVETSLIISSTQASITSPKNSAKISSLQSQLSSSTKNPYDTANKNTETSGRSTVVSNFLYTSSAAKPDNEKFSATPTEITTISSSSHAYSLSIPSSHNSVTGLSHNFVDSSKSATSFGYSSSSISSIKLSKETIPASKSVSNTQERITSFTSTLRANSQSEKSEGRNSVGSLQSSHISSNPSLSTNTKVDSKSLSRKVSKTMGENGEETGLTTTKTQYKSSSETSGSYSRSFTKISIGPATTAVQTQASTNSVFTAPALSTYPTTPYPSPNSYAWLPTAIIVESSETGPTTASFNPSITGSLPNAIEPAVAVSEPINHTLITIGFTAALNYVFLVQNPLSSAQIFNFLPLVLKYPFSNTSSELDNSIGELSTFILSYRSGSSTTTLSPKSISSLSVVKKKKNQQKKNATKSTEDLHPPQVDTSSIAVKKIVPMVDSSKAYIVSVAEVYFPTEAVTYLQQLILDENSTLYSNPQTPLRSLAGLIDSGIPLGGLTLYGSGDGGYVPSLTSSSVLDSSKGNSQNIDGTYKYGALDDFINSFTDSASAGKYAVKIIIFLIVLTIGVLLWLFVAFFAFRHRNILLKRHPRNCIGKSLNNERELESTELSRSSSGNQVYNEKPPESENESVYSAVDDHYIVTGENTVYNTIHRLHYTINDDGDLLYRDAIPLDFDQTNGDDGSGIDSIVRDCVYDKNQDATEAFLNDEESISGILDVDENGDIRLYDSYSDNEESNSFHLPDEVIENYNKNHLCETKLHGLGTESCTTDDPDTGNQITNEFSTGSQTCLPSTAYTTPLHTNSIKLHTLRYTESSLPKPNQTLFSNLEDLEIEDIDDNGSVSDVHIEELDALDEELYKRMSKVIKQQNHQTTKI.

Residues 1 to 21 (MVSLKIKKILLLVSLLNAIEA) form the signal peptide. The Extracellular segment spans residues 22–1485 (YSNDTIYSTS…SASAGKYAVK (1464 aa)). Asn24 carries an N-linked (GlcNAc...) asparagine glycan. Disordered regions lie at residues 47–176 (ISST…PREI) and 261–311 (YSSS…VSRP). Polar residues predominate over residues 54-81 (NKENAITSSSETTTMAGQYGESGSTTIM). Positions 88 to 107 (TSSQYISVTTTTQTSDTMSS) are enriched in low complexity. Residues 113–143 (EIATPSSSIVPTPLQSYSDESQISQTLSHNP) show a composition bias toward polar residues. Composition is skewed to low complexity over residues 145 to 172 (SVAE…SSAV) and 261 to 302 (YSSS…SESS). One copy of the 1; approximate repeat lies at 453–480 (SVPVAVSSTYTSSPSASVVVPSAYASSP). The segment at 453 to 788 (SVPVAVSSTY…VLSSTSTSSP (336 aa)) is 12 X 28 AA tandem repeats of S-[AV]-[P]-V-A-V-S-S-T-Y-T-S-S-P-S-A-P-A-A-I-S-S-T-Y-T-S-S-P. 11 consecutive repeat copies span residues 481–508 (SVPV…TSSP), 509–536 (SAPV…TSSP), 537–564 (SAPV…TSSP), 565–592 (SAPV…TSSP), 593–620 (SVPV…TSSP), 621–648 (SAPV…TSSP), 649–676 (SVPV…TSSP), 677–704 (SVPV…TSSP), 705–732 (SAPV…TSSP), 733–760 (SAPV…TSSP), and 761–788 (SAPV…TSSP). Disordered stretches follow at residues 961-984 (SLQS…TETS) and 1067-1165 (ETIP…SYSR). Composition is skewed to polar residues over residues 970–984 (TKNP…TETS) and 1071–1123 (ASKS…TNTK). Residues 1136–1165 (TMGENGEETGLTTTKTQYKSSSETSGSYSR) are compositionally biased toward low complexity. N-linked (GlcNAc...) asparagine glycosylation is found at Asn1252, Asn1293, Asn1342, and Asn1400. The helical transmembrane segment at 1486–1506 (IIIFLIVLTIGVLLWLFVAFF) threads the bilayer. Residues 1507 to 1802 (AFRHRNILLK…KQQNHQTTKI (296 aa)) are Cytoplasmic-facing. Residues 1534 to 1559 (ESTELSRSSSGNQVYNEKPPESENES) are disordered.

It belongs to the HKR1/MSB2 family. Post-translationally, could be O-glycosylated in the serine/threonine-rich domain.

It is found in the cell membrane. Functionally, plasma membrane signaling mucin that promotes activation of the MAPK for the filamentous growth pathway. May regulate beta-glucan synthesis. Overexpression provides resistance to HM-1 killer toxin. This chain is Signaling mucin HKR1 (HKR1), found in Saccharomyces cerevisiae (strain ATCC 204508 / S288c) (Baker's yeast).